Consider the following 179-residue polypeptide: Large ribosomal subunit protein uL5 (179 aa).

It belongs to the universal ribosomal protein uL5 family. As to quaternary structure, part of the 50S ribosomal subunit; part of the 5S rRNA/L5/L18/L25 subcomplex. Contacts the 5S rRNA and the P site tRNA. Forms a bridge to the 30S subunit in the 70S ribosome.

Functionally, this is one of the proteins that bind and probably mediate the attachment of the 5S RNA into the large ribosomal subunit, where it forms part of the central protuberance. In the 70S ribosome it contacts protein S13 of the 30S subunit (bridge B1b), connecting the 2 subunits; this bridge is implicated in subunit movement. Contacts the P site tRNA; the 5S rRNA and some of its associated proteins might help stabilize positioning of ribosome-bound tRNAs. In Nitrosomonas europaea (strain ATCC 19718 / CIP 103999 / KCTC 2705 / NBRC 14298), this protein is Large ribosomal subunit protein uL5.